The sequence spans 310 residues: ADP-L-glycero-D-manno-heptose-6-epimerase (310 aa).

NADP(+) is bound by residues 10-11 (FI), 31-32 (DN), Lys38, Lys53, 75-79 (EGACS), and Asn92. The active-site Proton acceptor is the Tyr140. Residue Lys144 participates in NADP(+) binding. Residue Asn169 participates in substrate binding. Positions 170 and 178 each coordinate NADP(+). Lys178 acts as the Proton acceptor in catalysis. Residues Ser180, His187, 201–204 (FEGS), and Arg209 contribute to the substrate site. Lys267 carries the N6-acetyllysine modification. Residue Tyr272 participates in substrate binding.

The protein belongs to the NAD(P)-dependent epimerase/dehydratase family. HldD subfamily. Homopentamer. NADP(+) serves as cofactor.

The enzyme catalyses ADP-D-glycero-beta-D-manno-heptose = ADP-L-glycero-beta-D-manno-heptose. It participates in nucleotide-sugar biosynthesis; ADP-L-glycero-beta-D-manno-heptose biosynthesis; ADP-L-glycero-beta-D-manno-heptose from D-glycero-beta-D-manno-heptose 7-phosphate: step 4/4. Catalyzes the interconversion between ADP-D-glycero-beta-D-manno-heptose and ADP-L-glycero-beta-D-manno-heptose via an epimerization at carbon 6 of the heptose. This Escherichia coli (strain SMS-3-5 / SECEC) protein is ADP-L-glycero-D-manno-heptose-6-epimerase.